Consider the following 629-residue polypeptide: DNA mismatch repair protein MutL (629 aa).

The protein belongs to the DNA mismatch repair MutL/HexB family.

Functionally, this protein is involved in the repair of mismatches in DNA. It is required for dam-dependent methyl-directed DNA mismatch repair. May act as a 'molecular matchmaker', a protein that promotes the formation of a stable complex between two or more DNA-binding proteins in an ATP-dependent manner without itself being part of a final effector complex. This Haemophilus influenzae (strain 86-028NP) protein is DNA mismatch repair protein MutL.